A 63-amino-acid chain; its full sequence is Large ribosomal subunit protein bL28 (63 aa).

Belongs to the bacterial ribosomal protein bL28 family.

This is Large ribosomal subunit protein bL28 from Solibacter usitatus (strain Ellin6076).